We begin with the raw amino-acid sequence, 427 residues long: 3-deoxy-D-manno-octulosonic acid transferase (427 aa).

Residues 4–24 (FFYTSLLLICQPLILCFIGLL) traverse the membrane as a helical; Signal-anchor segment. Residue E62 is the Proton acceptor of the active site. CMP contacts are provided by residues 270-271 (PR), 311-313 (MGE), and 337-340 (NPLE).

This sequence belongs to the glycosyltransferase group 1 family. Glycosyltransferase 30 subfamily.

Its subcellular location is the cell inner membrane. It catalyses the reaction lipid IVA (E. coli) + CMP-3-deoxy-beta-D-manno-octulosonate = alpha-Kdo-(2-&gt;6)-lipid IVA (E. coli) + CMP + H(+). It functions in the pathway bacterial outer membrane biogenesis; LPS core biosynthesis. In terms of biological role, involved in lipopolysaccharide (LPS) biosynthesis. Catalyzes the transfer of a single 3-deoxy-D-manno-octulosonate (Kdo) residue from CMP-Kdo to lipid IV(A), the tetraacyldisaccharide-1,4'-bisphosphate precursor of lipid A. Is strictly monofunctional, i.e. is capable of adding only a single Kdo residue to the acceptor lipid. The sequence is that of 3-deoxy-D-manno-octulosonic acid transferase (waaA) from Haemophilus influenzae (strain ATCC 51907 / DSM 11121 / KW20 / Rd).